A 670-amino-acid polypeptide reads, in one-letter code: Acetyl-coenzyme A synthetase (670 aa).

CoA contacts are provided by residues 205-208 (RRGR) and threonine 326. Residues 402–404 (GEP), 426–431 (STWWMT), aspartate 517, arginine 532, and arginine 543 contribute to the ATP site. Mg(2+)-binding residues include histidine 556 and valine 559. Arginine 601 is a binding site for CoA. Position 626 is an N6-acetyllysine (lysine 626).

This sequence belongs to the ATP-dependent AMP-binding enzyme family. It depends on Mg(2+) as a cofactor. In terms of processing, acetylated. Deacetylation by the SIR2-homolog deacetylase activates the enzyme.

The enzyme catalyses acetate + ATP + CoA = acetyl-CoA + AMP + diphosphate. Catalyzes the conversion of acetate into acetyl-CoA (AcCoA), an essential intermediate at the junction of anabolic and catabolic pathways. AcsA undergoes a two-step reaction. In the first half reaction, AcsA combines acetate with ATP to form acetyl-adenylate (AcAMP) intermediate. In the second half reaction, it can then transfer the acetyl group from AcAMP to the sulfhydryl group of CoA, forming the product AcCoA. The polypeptide is Acetyl-coenzyme A synthetase (Pyrobaculum aerophilum (strain ATCC 51768 / DSM 7523 / JCM 9630 / CIP 104966 / NBRC 100827 / IM2)).